The following is a 58-amino-acid chain: Large ribosomal subunit protein bL32 (58 aa).

It belongs to the bacterial ribosomal protein bL32 family.

This is Large ribosomal subunit protein bL32 from Staphylococcus aureus (strain NCTC 8325 / PS 47).